Here is a 171-residue protein sequence, read N- to C-terminus: Crossover junction endodeoxyribonuclease RuvC (171 aa).

Active-site residues include D7, E74, and D147. Mg(2+) contacts are provided by D7, E74, and D147.

The protein belongs to the RuvC family. Homodimer which binds Holliday junction (HJ) DNA. The HJ becomes 2-fold symmetrical on binding to RuvC with unstacked arms; it has a different conformation from HJ DNA in complex with RuvA. In the full resolvosome a probable DNA-RuvA(4)-RuvB(12)-RuvC(2) complex forms which resolves the HJ. Mg(2+) serves as cofactor.

Its subcellular location is the cytoplasm. It carries out the reaction Endonucleolytic cleavage at a junction such as a reciprocal single-stranded crossover between two homologous DNA duplexes (Holliday junction).. The RuvA-RuvB-RuvC complex processes Holliday junction (HJ) DNA during genetic recombination and DNA repair. Endonuclease that resolves HJ intermediates. Cleaves cruciform DNA by making single-stranded nicks across the HJ at symmetrical positions within the homologous arms, yielding a 5'-phosphate and a 3'-hydroxyl group; requires a central core of homology in the junction. The consensus cleavage sequence is 5'-(A/T)TT(C/G)-3'. Cleavage occurs on the 3'-side of the TT dinucleotide at the point of strand exchange. HJ branch migration catalyzed by RuvA-RuvB allows RuvC to scan DNA until it finds its consensus sequence, where it cleaves and resolves the cruciform DNA. The sequence is that of Crossover junction endodeoxyribonuclease RuvC from Acidobacterium capsulatum (strain ATCC 51196 / DSM 11244 / BCRC 80197 / JCM 7670 / NBRC 15755 / NCIMB 13165 / 161).